The following is a 1602-amino-acid chain: Calmodulin-regulated spectrin-associated protein 1 (1602 aa).

Residues Glu216 to Glu331 enclose the Calponin-homology (CH) domain. 5 positions are modified to phosphoserine: Ser217, Ser371, Ser375, Ser416, and Ser431. The segment at Gln426–Gln471 is disordered. Phosphothreonine is present on Thr512. Residues Ser563, Ser575, and Ser589 each carry the phosphoserine modification. Over residues Ala603 to Pro620 the composition is skewed to basic and acidic residues. Residues Ala603–Arg637 are disordered. 5 positions are modified to phosphoserine: Ser629, Ser722, Ser728, Ser738, and Ser740. A compositionally biased stretch (basic and acidic residues) spans Lys772 to Ser789. Disordered regions lie at residues Lys772 to Ala808 and Leu825 to Pro870. Low complexity-rich tracts occupy residues Ser797–Ala808 and Thr830–Thr841. Residues Gln857–Asp869 show a composition bias toward basic and acidic residues. The tract at residues Ala871–Ile892 is sufficient for interaction with SPTBN1. 2 coiled-coil regions span residues Leu873–Lys909 and Asp1016–Leu1048. The tract at residues Ser903–Gly922 is sufficient for interaction with calmodulin. Disordered stretches follow at residues Phe1075–Leu1165, Lys1206–Pro1226, and Ala1301–Thr1448. Ser1080 is subject to Phosphoserine. Positions Arg1103–Pro1114 are enriched in basic and acidic residues. Positions Gln1115–Val1127 are enriched in polar residues. The segment covering Lys1206–Ser1220 has biased composition (low complexity). Residues Leu1291–Glu1343 adopt a coiled-coil conformation. Over residues Ala1301–Arg1346 the composition is skewed to basic and acidic residues. Residues Pro1361–Ser1372 show a composition bias toward basic residues. Positions Ser1380–Asn1392 are enriched in polar residues. The span at Leu1393–Thr1410 shows a compositional bias: low complexity. 2 positions are modified to phosphoserine: Ser1398 and Ser1427. The CKK domain maps to Gly1463–Lys1597. Tyr1537 is subject to Phosphotyrosine.

The protein belongs to the CAMSAP1 family. Interacts with spectrin via SPTBN1; the interaction is direct. Interacts with calmodulin; calcium-dependent it prevents interaction with spectrin.

It localises to the cytoplasm. The protein resides in the cytoskeleton. Key microtubule-organizing protein that specifically binds the minus-end of non-centrosomal microtubules and regulates their dynamics and organization. Specifically recognizes growing microtubule minus-ends and stabilizes microtubules. Acts on free microtubule minus-ends that are not capped by microtubule-nucleating proteins or other factors and protects microtubule minus-ends from depolymerization. In contrast to CAMSAP2 and CAMSAP3, tracks along the growing tips of minus-end microtubules without significantly affecting the polymerization rate: binds at the very tip of the microtubules minus-end and acts as a minus-end tracking protein (-TIP) that dissociates from microtubules after allowing tubulin incorporation. Through interaction with spectrin may regulate neurite outgrowth. This is Calmodulin-regulated spectrin-associated protein 1 (CAMSAP1) from Homo sapiens (Human).